We begin with the raw amino-acid sequence, 304 residues long: 15-cis-phytoene synthase (304 aa).

It belongs to the phytoene/squalene synthase family. The cofactor is ATP. Mn(2+) is required as a cofactor. It depends on Mg(2+) as a cofactor.

It carries out the reaction 2 (2E,6E,10E)-geranylgeranyl diphosphate = 15-cis-phytoene + 2 diphosphate. It participates in carotenoid biosynthesis; astaxanthin biosynthesis. Its pathway is carotenoid biosynthesis; phytoene biosynthesis. Its function is as follows. Involved in the biosynthesis of carotenoids for the production of astaxanthin. Catalyzes the condensation of two molecules of geranylgeranyl diphosphate (GGPP) to give prephytoene diphosphate (PPPP) and the subsequent rearrangement of the cyclopropylcarbinyl intermediate to yield 15-cis phytoene. The chain is 15-cis-phytoene synthase (crtB) from Paracoccus sp. (strain N81106 / MBIC 01143) (Agrobacterium aurantiacum).